A 210-amino-acid chain; its full sequence is uncharacterized protein (210 aa).

The 177-residue stretch at 4 to 180 (RKVYLYVFHT…AVEVLKKLDV (177 aa)) folds into the PfpI endopeptidase domain. Cys-110 serves as the catalytic Nucleophile.

The protein belongs to the peptidase C56 family.

This is an uncharacterized protein from Bacillus subtilis (strain 168).